Consider the following 559-residue polypeptide: Thermosome subunit alpha (559 aa).

A compositionally biased stretch (basic and acidic residues) spans 535-547 (SEKKGGEGSKEES). The tract at residues 535–559 (SEKKGGEGSKEESGGEGGSTPSLGD) is disordered.

Belongs to the TCP-1 chaperonin family. Forms a Heterooligomeric complex of two stacked eight-membered rings.

Its function is as follows. Molecular chaperone; binds unfolded polypeptides in vitro, and has a weak ATPase activity. The protein is Thermosome subunit alpha (thsA) of Saccharolobus solfataricus (strain ATCC 35092 / DSM 1617 / JCM 11322 / P2) (Sulfolobus solfataricus).